A 200-amino-acid chain; its full sequence is 3-isopropylmalate dehydratase small subunit (200 aa).

The protein belongs to the LeuD family. LeuD type 1 subfamily. In terms of assembly, heterodimer of LeuC and LeuD.

It carries out the reaction (2R,3S)-3-isopropylmalate = (2S)-2-isopropylmalate. It functions in the pathway amino-acid biosynthesis; L-leucine biosynthesis; L-leucine from 3-methyl-2-oxobutanoate: step 2/4. Functionally, catalyzes the isomerization between 2-isopropylmalate and 3-isopropylmalate, via the formation of 2-isopropylmaleate. The protein is 3-isopropylmalate dehydratase small subunit of Erythrobacter litoralis (strain HTCC2594).